Here is a 104-residue protein sequence, read N- to C-terminus: Integration host factor subunit beta (104 aa).

Belongs to the bacterial histone-like protein family. In terms of assembly, heterodimer of an alpha and a beta chain.

In terms of biological role, this protein is one of the two subunits of integration host factor, a specific DNA-binding protein that functions in genetic recombination as well as in transcriptional and translational control. The chain is Integration host factor subunit beta (ihfB) from Neisseria gonorrhoeae.